We begin with the raw amino-acid sequence, 378 residues long: Leukosialin (378 aa).

The first 7 residues, 1–7 (WAQVVSQ), serve as a signal peptide directing secretion. At 8-231 (ENLPNTMTML…TVPPRPGSSG (224 aa)) the chain is on the extracellular side. Residues threonine 13, threonine 15, and threonine 20 are each glycosylated (O-linked (GalNAc...) threonine). Residues 13-33 (TMTMLPFTPNSESPSTSEALS) form a disordered region. 3 O-linked (GalNAc...) serine glycosylation sites follow: serine 23, serine 25, and serine 27. A glycan (O-linked (GalNAc...) threonine) is linked at threonine 28. O-linked (GalNAc...) serine glycans are attached at residues serine 29 and serine 33. O-linked (GalNAc...) threonine glycosylation occurs at threonine 34. O-linked (GalNAc...) serine glycans are attached at residues serine 36 and serine 37. A glycan (O-linked (GalNAc...) threonine) is linked at threonine 40. Residues serine 108 and serine 113 are each glycosylated (O-linked (GalNAc...) serine). Residues threonine 118, threonine 120, and threonine 124 are each glycosylated (O-linked (GalNAc...) threonine). Residues serine 125 and serine 126 are each glycosylated (O-linked (GalNAc...) serine). Threonine 174 carries an O-linked (GalNAc...) threonine glycan. O-linked (GalNAc...) serine glycosylation is found at serine 176 and serine 180. An O-linked (GalNAc...) threonine glycan is attached at threonine 183. Residue serine 187 is glycosylated (O-linked (GalNAc...) serine). Residue threonine 189 is glycosylated (O-linked (GalNAc...) threonine). The helical transmembrane segment at 232–254 (MLLVSMLIALTVVLVLVALLLLW) threads the bilayer. Residues 255–285 (RQRQKRRTGALTLSRGGKRNGTVDAWAGPAR) form a required for interaction with EZR, MSN and RDX and for co-localization to microvilli region. Residues 255 to 378 (RQRQKRRTGA…AKDGAAPQSL (124 aa)) are Cytoplasmic-facing. Residues 259–273 (KRRTGALTLSRGGKR) carry the Nuclear localization signal motif. A disordered region spans residues 265 to 378 (LTLSRGGKRN…AKDGAAPQSL (114 aa)). Serine 268 carries the phosphoserine modification. Threonine 276 carries the post-translational modification Phosphothreonine. Positions 310 to 321 (GSGQRPTLTTFF) are enriched in polar residues. The residue at position 311 (serine 311) is a Phosphoserine. Threonine 316 bears the Phosphothreonine mark. Phosphoserine is present on residues serine 322 and serine 326. Residue serine 330 is modified to Phosphoserine; by PKC/PRKCQ. Serine 354 bears the Phosphoserine mark. Threonine 361 carries the phosphothreonine modification.

In terms of assembly, interacts with SIGLEC1. Monomer. Interacts with CTNNB1. Interacts with EZR, MSN and RDX (via FERM domain). Has a high content of sialic acid and O-linked carbohydrate structures. In terms of processing, phosphorylation at Ser-330 is regulated by chemokines, requires its association with ERM proteins (EZR, RDX and MSN) and is essential for its function in the regulation of T-cell trafficking to lymph nodes. Post-translationally, cleavage by CTSG releases its extracellular domain and triggers its intramembrane proteolysis by gamma-secretase releasing the CD43 cytoplasmic tail chain (CD43-ct) which translocates to the nucleus. Sumoylated. Cell surface of thymocytes, T-lymphocytes, neutrophils, plasma cells and myelomas.

It localises to the membrane. It is found in the cell projection. Its subcellular location is the microvillus. The protein resides in the uropodium. The protein localises to the nucleus. It localises to the PML body. Predominant cell surface sialoprotein of leukocytes which regulates multiple T-cell functions, including T-cell activation, proliferation, differentiation, trafficking and migration. Positively regulates T-cell trafficking to lymph-nodes via its association with ERM proteins (EZR, RDX and MSN). Negatively regulates Th2 cell differentiation and predisposes the differentiation of T-cells towards a Th1 lineage commitment. Promotes the expression of IFN-gamma by T-cells during T-cell receptor (TCR) activation of naive cells and induces the expression of IFN-gamma by CD4(+) T-cells and to a lesser extent by CD8(+) T-cells. Plays a role in preparing T-cells for cytokine sensing and differentiation into effector cells by inducing the expression of cytokine receptors IFNGR and IL4R, promoting IFNGR and IL4R signaling and by mediating the clustering of IFNGR with TCR. Acts as a major E-selectin ligand responsible for Th17 cell rolling on activated vasculature and recruitment during inflammation. Mediates Th17 cells, but not Th1 cells, adhesion to E-selectin. Acts as a T-cell counter-receptor for SIGLEC1. Its function is as follows. Protects cells from apoptotic signals, promoting cell survival. In Rattus norvegicus (Rat), this protein is Leukosialin (Spn).